The sequence spans 300 residues: Cation-efflux pump FieF (300 aa).

4 helical membrane passes run 12-32 (AAIAATVMASLLLLIKIFAWW), 39-59 (ILAALVDSLVDIAASLTNLLV), 82-102 (AALAQSMFISGSALFLFLTGI), and 114-134 (PGVGIVVTLIALVCTIILVTF). 2 residues coordinate Zn(2+): aspartate 45 and aspartate 49. The Zn(2+) site is built by histidine 153 and aspartate 157. Residues 164 to 184 (ILVALGLAWYGWHRADALFAL) traverse the membrane as a helical segment.

The protein belongs to the cation diffusion facilitator (CDF) transporter (TC 2.A.4) family. FieF subfamily. In terms of assembly, homodimer.

The protein localises to the cell inner membrane. The catalysed reaction is Zn(2+)(in) + H(+)(out) = Zn(2+)(out) + H(+)(in). It catalyses the reaction Cd(2+)(in) + H(+)(out) = Cd(2+)(out) + H(+)(in). The enzyme catalyses Fe(2+)(in) + H(+)(out) = Fe(2+)(out) + H(+)(in). Its function is as follows. Divalent metal cation transporter which exports Zn(2+), Cd(2+) and possibly Fe(2+). May be involved in zinc and iron detoxification by efflux. The polypeptide is Cation-efflux pump FieF (Citrobacter koseri (strain ATCC BAA-895 / CDC 4225-83 / SGSC4696)).